The primary structure comprises 268 residues: Tryptophan synthase alpha chain (268 aa).

Catalysis depends on proton acceptor residues Glu-49 and Asp-60.

The protein belongs to the TrpA family. As to quaternary structure, tetramer of two alpha and two beta chains.

It catalyses the reaction (1S,2R)-1-C-(indol-3-yl)glycerol 3-phosphate + L-serine = D-glyceraldehyde 3-phosphate + L-tryptophan + H2O. It functions in the pathway amino-acid biosynthesis; L-tryptophan biosynthesis; L-tryptophan from chorismate: step 5/5. In terms of biological role, the alpha subunit is responsible for the aldol cleavage of indoleglycerol phosphate to indole and glyceraldehyde 3-phosphate. This is Tryptophan synthase alpha chain from Pectobacterium atrosepticum (strain SCRI 1043 / ATCC BAA-672) (Erwinia carotovora subsp. atroseptica).